The primary structure comprises 152 residues: Transcriptional regulator MraZ (152 aa).

SpoVT-AbrB domains lie at 5–52 (ASAI…PADE) and 81–124 (AHEI…DEAQ).

Belongs to the MraZ family. As to quaternary structure, forms oligomers.

The protein resides in the cytoplasm. The protein localises to the nucleoid. In Shewanella amazonensis (strain ATCC BAA-1098 / SB2B), this protein is Transcriptional regulator MraZ.